The sequence spans 157 residues: Dihydrofolate reductase type 5 (157 aa).

A DHFR domain is found at 2 to 156; the sequence is KVSLMAAKAK…INYCYQIWQK (155 aa).

Belongs to the dihydrofolate reductase family. In terms of assembly, homodimer.

It catalyses the reaction (6S)-5,6,7,8-tetrahydrofolate + NADP(+) = 7,8-dihydrofolate + NADPH + H(+). It functions in the pathway cofactor biosynthesis; tetrahydrofolate biosynthesis; 5,6,7,8-tetrahydrofolate from 7,8-dihydrofolate: step 1/1. Its function is as follows. Key enzyme in folate metabolism. Catalyzes an essential reaction for de novo glycine and purine synthesis, and for DNA precursor synthesis. The sequence is that of Dihydrofolate reductase type 5 (dhfrV) from Escherichia coli.